Reading from the N-terminus, the 869-residue chain is Rho GTPase-activating protein 27 (869 aa).

Residues 6 to 69 (EGDVYVLVEH…PAQYVRELPA (64 aa)) form the SH3 domain. The tract at residues 104–137 (GADGSSAEPRGRASSLCGPARQRTSGQRNSLAPG) is disordered. Phosphoserine occurs at positions 155, 215, and 249. WW domains lie at 246 to 280 (PRLS…SPFE) and 299 to 333 (ESLE…DETE). 3 disordered regions span residues 275–299 (WESP…GSGE), 331–389 (ETEE…DLGP), and 447–474 (VPVP…PEEK). A compositionally biased stretch (acidic residues) spans 331–343 (ETEELEDDPEEQL). Polar residues predominate over residues 345 to 356 (MQPSLSPRSPGQ). Ser350 is subject to Phosphoserine. The region spanning 414–447 (QFTQEQWVRLEDQEGKPYFYNPEDSSVQWELPQV) is the WW 3 domain. Phosphoserine occurs at positions 459 and 462. The residue at position 464 (Thr464) is a Phosphothreonine. The residue at position 469 (Ser469) is a Phosphoserine. Positions 477–593 (TLDKAGVLHR…WHKAIAEGIE (117 aa)) constitute a PH domain. A disordered region spans residues 598–644 (DLPQREEGEPSSADFGSSERLGSWKEEDVRPNAASPSLNPGSQESDL). Residues 631–642 (ASPSLNPGSQES) are compositionally biased toward polar residues. Ser632 is modified (phosphoserine). Residues 677 to 866 (CALAQLCERE…LILHQCADIF (190 aa)) form the Rho-GAP domain.

In terms of assembly, interacts with SH3KBP1/CIN85.

It is found in the cytoplasm. The protein localises to the membrane. Rho GTPase-activating protein which may be involved in clathrin-mediated endocytosis. GTPase activators for the Rho-type GTPases act by converting them to an inactive GDP-bound state. Has activity toward CDC42 and RAC1. The protein is Rho GTPase-activating protein 27 (Arhgap27) of Rattus norvegicus (Rat).